The sequence spans 169 residues: Ribosome maturation factor RimM (169 aa).

The 73-residue stretch at 97–169 folds into the PRC barrel domain; sequence NDEAYFTDLI…KIVVDWEYDY (73 aa).

Belongs to the RimM family. Binds ribosomal protein uS19.

Its subcellular location is the cytoplasm. An accessory protein needed during the final step in the assembly of 30S ribosomal subunit, possibly for assembly of the head region. Essential for efficient processing of 16S rRNA. May be needed both before and after RbfA during the maturation of 16S rRNA. It has affinity for free ribosomal 30S subunits but not for 70S ribosomes. The protein is Ribosome maturation factor RimM of Francisella philomiragia subsp. philomiragia (strain ATCC 25017 / CCUG 19701 / FSC 153 / O#319-036).